Reading from the N-terminus, the 168-residue chain is Protein C2-DOMAIN ABA-RELATED 1 (168 aa).

An N-acetylmethionine modification is found at Met-1. A C2 domain is found at 1–104; the sequence is MENLVGLLRI…EAIKFAHQLG (104 aa). Ca(2+)-binding residues include Arg-21, Asp-22, Asp-27, Asp-73, Tyr-74, Asp-75, and Asp-81.

It belongs to the plant CAR protein family. In terms of assembly, dimers and oligomers. Binds to PYR/PYL/RCAR abscisic acid intracellular receptors in an ABA-independent manner, both at the plasma membrane and in the nucleus. Interacts directly with PYR1, PYL1, PYL4, PYL6 and PYL8. Binds phospholipids in a Ca(2+)-dependent manner. Requires Ca(2+) as cofactor. Expressed in roots.

The protein localises to the cell membrane. Its subcellular location is the nucleus. Stimulates the GTPase/ATPase activities of Obg-like ATPases. Mediates the transient calcium-dependent interaction of PYR/PYL/RCAR abscisic acid (ABA) receptors with the plasma membrane and thus regulates ABA sensitivity. Binds liposomes in the absence of exogenous Ca(2+), but this activity is enhanced in the presence of Ca(2+) and generates membrane curvature. The sequence is that of Protein C2-DOMAIN ABA-RELATED 1 from Arabidopsis thaliana (Mouse-ear cress).